Here is a 321-residue protein sequence, read N- to C-terminus: Tetraacyldisaccharide 4'-kinase (321 aa).

54 to 61 serves as a coordination point for ATP; that stretch reads SVGGTGKT.

The protein belongs to the LpxK family.

It catalyses the reaction a lipid A disaccharide + ATP = a lipid IVA + ADP + H(+). Its pathway is glycolipid biosynthesis; lipid IV(A) biosynthesis; lipid IV(A) from (3R)-3-hydroxytetradecanoyl-[acyl-carrier-protein] and UDP-N-acetyl-alpha-D-glucosamine: step 6/6. Functionally, transfers the gamma-phosphate of ATP to the 4'-position of a tetraacyldisaccharide 1-phosphate intermediate (termed DS-1-P) to form tetraacyldisaccharide 1,4'-bis-phosphate (lipid IVA). In Rickettsia africae (strain ESF-5), this protein is Tetraacyldisaccharide 4'-kinase.